We begin with the raw amino-acid sequence, 200 residues long: Imidazole glycerol phosphate synthase subunit HisH (200 aa).

The Glutamine amidotransferase type-1 domain maps to 3–200; that stretch reads EVALIDAGGA…LRNFLEMDAA (198 aa). Cys78 functions as the Nucleophile in the catalytic mechanism. Catalysis depends on residues His179 and Glu181.

In terms of assembly, heterodimer of HisH and HisF.

It is found in the cytoplasm. It carries out the reaction 5-[(5-phospho-1-deoxy-D-ribulos-1-ylimino)methylamino]-1-(5-phospho-beta-D-ribosyl)imidazole-4-carboxamide + L-glutamine = D-erythro-1-(imidazol-4-yl)glycerol 3-phosphate + 5-amino-1-(5-phospho-beta-D-ribosyl)imidazole-4-carboxamide + L-glutamate + H(+). The enzyme catalyses L-glutamine + H2O = L-glutamate + NH4(+). The protein operates within amino-acid biosynthesis; L-histidine biosynthesis; L-histidine from 5-phospho-alpha-D-ribose 1-diphosphate: step 5/9. In terms of biological role, IGPS catalyzes the conversion of PRFAR and glutamine to IGP, AICAR and glutamate. The HisH subunit catalyzes the hydrolysis of glutamine to glutamate and ammonia as part of the synthesis of IGP and AICAR. The resulting ammonia molecule is channeled to the active site of HisF. This Xylella fastidiosa (strain Temecula1 / ATCC 700964) protein is Imidazole glycerol phosphate synthase subunit HisH.